Consider the following 163-residue polypeptide: Phosphopantetheine adenylyltransferase (163 aa).

T9 provides a ligand contact to substrate. ATP-binding positions include 9–10 (TF) and H17. The substrate site is built by K41, T73, and R87. ATP is bound by residues 88-90 (GLR), E98, and 123-129 (FSFISSS).

Belongs to the bacterial CoaD family. Homohexamer. Requires Mg(2+) as cofactor.

The protein localises to the cytoplasm. The enzyme catalyses (R)-4'-phosphopantetheine + ATP + H(+) = 3'-dephospho-CoA + diphosphate. It participates in cofactor biosynthesis; coenzyme A biosynthesis; CoA from (R)-pantothenate: step 4/5. Its function is as follows. Reversibly transfers an adenylyl group from ATP to 4'-phosphopantetheine, yielding dephospho-CoA (dPCoA) and pyrophosphate. This Desulfitobacterium hafniense (strain DSM 10664 / DCB-2) protein is Phosphopantetheine adenylyltransferase.